The following is a 473-amino-acid chain: Photosystem II CP43 reaction center protein (473 aa).

Positions 1 to 14 (MKILYSLRRFYHVE) are excised as a propeptide. Thr15 carries the post-translational modification N-acetylthreonine. Thr15 bears the Phosphothreonine mark. 5 helical membrane passes run 69–93 (LFEV…PHLA), 134–155 (LLGP…KDRN), 178–200 (KALY…RKIT), 255–275 (KPFA…LSYS), and 291–312 (WFNN…ASQA). Glu367 is a [CaMn4O5] cluster binding site. A helical transmembrane segment spans residues 447 to 471 (RARAAAAGFEKGIDRDLEPVLYMNP).

Belongs to the PsbB/PsbC family. PsbC subfamily. As to quaternary structure, PSII is composed of 1 copy each of membrane proteins PsbA, PsbB, PsbC, PsbD, PsbE, PsbF, PsbH, PsbI, PsbJ, PsbK, PsbL, PsbM, PsbT, PsbX, PsbY, PsbZ, Psb30/Ycf12, at least 3 peripheral proteins of the oxygen-evolving complex and a large number of cofactors. It forms dimeric complexes. It depends on Binds multiple chlorophylls and provides some of the ligands for the Ca-4Mn-5O cluster of the oxygen-evolving complex. It may also provide a ligand for a Cl- that is required for oxygen evolution. PSII binds additional chlorophylls, carotenoids and specific lipids. as a cofactor.

It is found in the plastid. Its subcellular location is the chloroplast thylakoid membrane. In terms of biological role, one of the components of the core complex of photosystem II (PSII). It binds chlorophyll and helps catalyze the primary light-induced photochemical processes of PSII. PSII is a light-driven water:plastoquinone oxidoreductase, using light energy to abstract electrons from H(2)O, generating O(2) and a proton gradient subsequently used for ATP formation. In Lolium perenne (Perennial ryegrass), this protein is Photosystem II CP43 reaction center protein.